A 104-amino-acid chain; its full sequence is SPbeta prophage-derived stress response protein SCP1 (104 aa).

It localises to the cytoplasm. The sequence is that of SPbeta prophage-derived stress response protein SCP1 (yorD) from Bacillus subtilis (strain 168).